Consider the following 527-residue polypeptide: Probable malate:quinone oxidoreductase 2 (527 aa).

This sequence belongs to the MQO family. FAD serves as cofactor.

It catalyses the reaction (S)-malate + a quinone = a quinol + oxaloacetate. The protein operates within carbohydrate metabolism; tricarboxylic acid cycle; oxaloacetate from (S)-malate (quinone route): step 1/1. This is Probable malate:quinone oxidoreductase 2 from Pseudomonas putida (strain ATCC 47054 / DSM 6125 / CFBP 8728 / NCIMB 11950 / KT2440).